We begin with the raw amino-acid sequence, 116 residues long: NADH-quinone oxidoreductase subunit A (116 aa).

A run of 3 helical transmembrane segments spans residues 3–23 (FTLLVVVLLTAIAFVGVVIAL), 61–81 (FAILFLMFDVETVFLFPWAVI), and 88–108 (QGLISILFFLVVLVLGLAYAW).

It belongs to the complex I subunit 3 family. In terms of assembly, NDH-1 is composed of 14 different subunits. Subunits NuoA, H, J, K, L, M, N constitute the membrane sector of the complex.

It is found in the cell inner membrane. It catalyses the reaction a quinone + NADH + 5 H(+)(in) = a quinol + NAD(+) + 4 H(+)(out). Functionally, NDH-1 shuttles electrons from NADH, via FMN and iron-sulfur (Fe-S) centers, to quinones in the respiratory chain. The immediate electron acceptor for the enzyme in this species is believed to be a menaquinone. Couples the redox reaction to proton translocation (for every two electrons transferred, four hydrogen ions are translocated across the cytoplasmic membrane), and thus conserves the redox energy in a proton gradient. This is NADH-quinone oxidoreductase subunit A from Bacteroides fragilis (strain ATCC 25285 / DSM 2151 / CCUG 4856 / JCM 11019 / LMG 10263 / NCTC 9343 / Onslow / VPI 2553 / EN-2).